The following is a 372-amino-acid chain: Erythronate-4-phosphate dehydrogenase (372 aa).

Positions 45 and 66 each coordinate substrate. NAD(+) is bound at residue Asp146. Arg209 is a catalytic residue. Asp233 serves as a coordination point for NAD(+). Residue Glu238 is part of the active site. The active-site Proton donor is the His255. NAD(+) is bound at residue Gly258. Tyr259 is a binding site for substrate.

Belongs to the D-isomer specific 2-hydroxyacid dehydrogenase family. PdxB subfamily. In terms of assembly, homodimer.

The protein resides in the cytoplasm. It carries out the reaction 4-phospho-D-erythronate + NAD(+) = (R)-3-hydroxy-2-oxo-4-phosphooxybutanoate + NADH + H(+). It functions in the pathway cofactor biosynthesis; pyridoxine 5'-phosphate biosynthesis; pyridoxine 5'-phosphate from D-erythrose 4-phosphate: step 2/5. Functionally, catalyzes the oxidation of erythronate-4-phosphate to 3-hydroxy-2-oxo-4-phosphonooxybutanoate. The sequence is that of Erythronate-4-phosphate dehydrogenase from Blochmanniella floridana.